The following is a 162-amino-acid chain: Phosphopantetheine adenylyltransferase (162 aa).

Residue serine 9 coordinates substrate. ATP contacts are provided by residues 9–10 (SF) and histidine 17. Substrate is bound by residues lysine 41, threonine 73, and arginine 87. Residues 88-90 (GLR), glutamate 98, and 123-129 (YSFISSS) contribute to the ATP site.

It belongs to the bacterial CoaD family. In terms of assembly, homohexamer. The cofactor is Mg(2+).

The protein localises to the cytoplasm. The enzyme catalyses (R)-4'-phosphopantetheine + ATP + H(+) = 3'-dephospho-CoA + diphosphate. The protein operates within cofactor biosynthesis; coenzyme A biosynthesis; CoA from (R)-pantothenate: step 4/5. Its function is as follows. Reversibly transfers an adenylyl group from ATP to 4'-phosphopantetheine, yielding dephospho-CoA (dPCoA) and pyrophosphate. The polypeptide is Phosphopantetheine adenylyltransferase (Carboxydothermus hydrogenoformans (strain ATCC BAA-161 / DSM 6008 / Z-2901)).